The chain runs to 178 residues: MDDTLNQANPSMSRRQLLNFFTGAIVATTASAAIYPATKFFMPPAESTDAEGGILAQDKIGHPIPASQILAQASGTRALIAGLAGEPTYLTVREDGTLDPMGIVNNCTHLGCTFPWNPVDQQFQCPCHGSRYDAQGSVERGPANRPLKLVQVQVKDDYIWISPWQETDPRTGEKPWWV.

A helical transmembrane segment spans residues 17–36 (LLNFFTGAIVATTASAAIYP). In terms of domain architecture, Rieske spans 61–161 (GHPIPASQIL…VQVKDDYIWI (101 aa)). Cys-107, His-109, Cys-125, and His-128 together coordinate [2Fe-2S] cluster. A disulfide bond links Cys-112 and Cys-127.

It belongs to the Rieske iron-sulfur protein family. In terms of assembly, the 4 large subunits of the cytochrome b6-f complex are cytochrome b6, subunit IV (17 kDa polypeptide, PetD), cytochrome f and the Rieske protein, while the 4 small subunits are PetG, PetL, PetM and PetN. The complex functions as a dimer. [2Fe-2S] cluster serves as cofactor.

It localises to the cellular thylakoid membrane. The enzyme catalyses 2 oxidized [plastocyanin] + a plastoquinol + 2 H(+)(in) = 2 reduced [plastocyanin] + a plastoquinone + 4 H(+)(out). Component of the cytochrome b6-f complex, which mediates electron transfer between photosystem II (PSII) and photosystem I (PSI), cyclic electron flow around PSI, and state transitions. This chain is Cytochrome b6-f complex iron-sulfur subunit 2, found in Nostoc sp. (strain PCC 7120 / SAG 25.82 / UTEX 2576).